Here is a 358-residue protein sequence, read N- to C-terminus: MTAMLTLETMASEEEYGPRNCVVCGDRATGYHFHALTCEGCKGFFRRTVSKTIGPICPFAGRCEVSKAQRRHCPACRLQKCLNVGMRKDMILSAEALALRRARQAQRRAEKASLQLNQQQKELVQILLGAHTRHVGPMFDQFVQFKPPAYLFMHHRPFQPRGPVLPLLTHFADINTFMVQQIIKFTKDLPLFRSLTMEDQISLLKGAAVEILHISLNTTFCLQTENFFCGPLCYKMEDAVHAGFQYEFLESILHFHKNLKGLHLQEPEYVLMAATALFSPDRPGVTQREEIDQLQEEMALILNNHIMEQQSRLQSRFLYAKLMGLLADLRSINNAYSYELQRLEELSAMTPLLGEICS.

The segment at residues 18 to 93 (PRNCVVCGDR…VGMRKDMILS (76 aa)) is a DNA-binding region (nuclear receptor). The NR C4-type zinc-finger motif lies at 21–41 (CVVCGDRATGYHFHALTCEGC). Thr-48 is modified (phosphothreonine; by PKC). Residues 57-81 (CPFAGRCEVSKAQRRHCPACRLQKC) form an NR C4-type zinc finger. Residues 119–358 (QQKELVQILL…MTPLLGEICS (240 aa)) enclose the NR LBD domain.

This sequence belongs to the nuclear hormone receptor family. NR1 subfamily. In terms of assembly, heterodimer of NR1I3 and RXR. Interacts with PSMC4. Interacts with ECT2. Directly interacts with DNAJC7; this complex may also include HSP90. Interacts with CRY1. Interacts with CRY2 in a ligand-dependent manner. Phosphorylated at Thr-48 by PKC, dephosphorylation of Thr-48 is required for nuclear translocation and activation. As to expression, predominantly expressed in liver.

Its subcellular location is the nucleus. It is found in the cytoplasm. The protein resides in the cytoskeleton. Binds and transactivates the retinoic acid response elements that control expression of the retinoic acid receptor beta 2 and alcohol dehydrogenase 3 genes. Transactivates both the phenobarbital responsive element module of the human CYP2B6 gene and the CYP3A4 xenobiotic response element. The protein is Nuclear receptor subfamily 1 group I member 3 (Nr1i3) of Mus musculus (Mouse).